We begin with the raw amino-acid sequence, 280 residues long: 4-deoxy-L-threo-5-hexosulose-uronate ketol-isomerase 1 (280 aa).

Zn(2+) contacts are provided by histidine 198, histidine 200, glutamate 205, and histidine 247.

It belongs to the KduI family. The cofactor is Zn(2+).

The enzyme catalyses 5-dehydro-4-deoxy-D-glucuronate = 3-deoxy-D-glycero-2,5-hexodiulosonate. It functions in the pathway glycan metabolism; pectin degradation; 2-dehydro-3-deoxy-D-gluconate from pectin: step 4/5. Catalyzes the isomerization of 5-dehydro-4-deoxy-D-glucuronate to 3-deoxy-D-glycero-2,5-hexodiulosonate. This Rhizobium meliloti (strain 1021) (Ensifer meliloti) protein is 4-deoxy-L-threo-5-hexosulose-uronate ketol-isomerase 1 (kduI1).